The chain runs to 546 residues: Methionine--tRNA ligase (546 aa).

The 'HIGH' region motif lies at 15–25; that stretch reads PYANGPIHLGH. Residues Cys146, Cys149, Cys159, and Cys162 each coordinate Zn(2+). Residues 332 to 336 carry the 'KMSKS' region motif; that stretch reads KMSKS. Lys335 contacts ATP.

Belongs to the class-I aminoacyl-tRNA synthetase family. MetG type 1 subfamily. Monomer. The cofactor is Zn(2+).

The protein resides in the cytoplasm. The enzyme catalyses tRNA(Met) + L-methionine + ATP = L-methionyl-tRNA(Met) + AMP + diphosphate. Is required not only for elongation of protein synthesis but also for the initiation of all mRNA translation through initiator tRNA(fMet) aminoacylation. The polypeptide is Methionine--tRNA ligase (Coxiella burnetii (strain RSA 331 / Henzerling II)).